The sequence spans 358 residues: Nuclear receptor subfamily 1 group I member 3 (358 aa).

The nuclear receptor DNA-binding region spans 18–93 (PRNCVVCGDR…VGMRKDMILS (76 aa)). The segment at 21-41 (CVVCGDRATGYHFHALTCEGC) adopts an NR C4-type zinc-finger fold. Residue Thr-48 is modified to Phosphothreonine; by PKC. An NR C4-type zinc finger spans residues 57–81 (CPFAGRCEVSKAQRRHCPACRLQKC). Residues 119–358 (QQKELIQTLL…MMPLLGEICS (240 aa)) form the NR LBD domain.

This sequence belongs to the nuclear hormone receptor family. NR1 subfamily. As to quaternary structure, heterodimer of NR1I3 and RXR. Interacts with PSMC4. Interacts with ECT2. Directly interacts with DNAJC7; this complex may also include HSP90. Interacts with CRY1. Interacts with CRY2 in a ligand-dependent manner. Post-translationally, phosphorylated at Thr-48 by PKC, dephosphorylation of Thr-48 is required for nuclear translocation and activation.

It localises to the nucleus. The protein resides in the cytoplasm. The protein localises to the cytoskeleton. Binds and transactivates the retinoic acid response elements that control expression of the retinoic acid receptor beta 2 and alcohol dehydrogenase 3 genes. Transactivates both the phenobarbital responsive element module of the human CYP2B6 gene and the CYP3A4 xenobiotic response element. This is Nuclear receptor subfamily 1 group I member 3 (Nr1i3) from Rattus norvegicus (Rat).